A 188-amino-acid polypeptide reads, in one-letter code: Protein SSX4 (188 aa).

The KRAB-related domain occupies 20–83; that stretch reads KLRKAFDDIA…KRAADFHGND (64 aa). Residues 116–127 are compositionally biased toward basic and acidic residues; it reads PAEEENGLKEVP. The segment at 116-167 is disordered; that stretch reads PAEEENGLKEVPEASGPQNDGKQLCPPGNPSTLEKINKTSGPKRGKHAWTHR. The span at 145-155 shows a compositional bias: polar residues; it reads PSTLEKINKTS. The span at 156-167 shows a compositional bias: basic residues; that stretch reads GPKRGKHAWTHR.

The protein belongs to the SSX family.

Functionally, could act as a modulator of transcription. This chain is Protein SSX4 (SSX4), found in Homo sapiens (Human).